The chain runs to 139 residues: uncharacterized protein (139 aa).

This is an uncharacterized protein from Saccharolobus islandicus (Sulfolobus islandicus).